The chain runs to 599 residues: Sulfite reductase [NADPH] flavoprotein alpha-component (599 aa).

The Flavodoxin-like domain occupies 64-202; it reads ITIISASQTG…AASEWRARVV (139 aa). Residues 70-75, 117-120, and 153-162 contribute to the FMN site; these read SQTGNA, STQG, and LGDSSYEFFC. An FAD-binding FR-type domain is found at 234–448; it reads DAPLAASLSV…IEHNDNFRLP (215 aa). FAD contacts are provided by residues Thr-322, Ala-356, 386-389, 404-406, Tyr-410, and 419-422; these read RLYS, TVG, and GGAS. Residues 519 to 520, 525 to 529, and Asp-561 contribute to the NADP(+) site; these read SR and KIYVQ. FAD is bound at residue Tyr-599.

It belongs to the NADPH-dependent sulphite reductase flavoprotein subunit CysJ family. The protein in the N-terminal section; belongs to the flavodoxin family. This sequence in the C-terminal section; belongs to the flavoprotein pyridine nucleotide cytochrome reductase family. As to quaternary structure, alpha(8)-beta(8). The alpha component is a flavoprotein, the beta component is a hemoprotein. The cofactor is FAD. It depends on FMN as a cofactor.

It carries out the reaction hydrogen sulfide + 3 NADP(+) + 3 H2O = sulfite + 3 NADPH + 4 H(+). Its pathway is sulfur metabolism; hydrogen sulfide biosynthesis; hydrogen sulfide from sulfite (NADPH route): step 1/1. In terms of biological role, component of the sulfite reductase complex that catalyzes the 6-electron reduction of sulfite to sulfide. This is one of several activities required for the biosynthesis of L-cysteine from sulfate. The flavoprotein component catalyzes the electron flow from NADPH -&gt; FAD -&gt; FMN to the hemoprotein component. In Escherichia coli O6:K15:H31 (strain 536 / UPEC), this protein is Sulfite reductase [NADPH] flavoprotein alpha-component.